A 316-amino-acid chain; its full sequence is Neuroguidin (316 aa).

Disordered stretches follow at residues 143 to 172 (SEAD…VKKY) and 280 to 316 (SALT…RKRH). A compositionally biased stretch (acidic residues) spans 145-157 (ADEGESDSGEDCA). Positions 297-316 (KKSRKGPKKSKKRKGFRKRH) are enriched in basic residues.

It belongs to the SAS10 family. Part of the small subunit (SSU) processome, composed of more than 70 proteins and the RNA chaperone small nucleolar RNA (snoRNA) U3.

The protein resides in the nucleus. It is found in the nucleolus. It localises to the chromosome. The protein localises to the centromere. Its subcellular location is the cytoplasm. The protein resides in the cell projection. It is found in the axon. It localises to the dendrite. The protein localises to the filopodium. Functionally, part of the small subunit (SSU) processome, first precursor of the small eukaryotic ribosomal subunit. During the assembly of the SSU processome in the nucleolus, many ribosome biogenesis factors, an RNA chaperone and ribosomal proteins associate with the nascent pre-rRNA and work in concert to generate RNA folding, modifications, rearrangements and cleavage as well as targeted degradation of pre-ribosomal RNA by the RNA exosome. Its dissociation from the complex determines the transition from state pre-A1 to state pre-A1*. May inhibit mRNA translation. This is Neuroguidin (ngdn) from Xenopus tropicalis (Western clawed frog).